A 304-amino-acid polypeptide reads, in one-letter code: Protein Largen (304 aa).

Polar residues predominate over residues 1–13; that stretch reads MSAKSKGNPSSSC. Disordered stretches follow at residues 1–27, 66–91, 114–160, and 239–304; these read MSAK…TKVK, QLED…TASS, LTVL…GGLP, and HPPG…TTTV. Residues 33 to 70 are a coiled coil; sequence IVEDLELVLGDLKDVAKELKEVVDQIDTLTSDLQLEDE. Over residues 77-91 the composition is skewed to low complexity; that stretch reads TDTLNSSSSGTTASS. Pro residues-rich tracts occupy residues 120–129, 239–261, and 277–289; these read PNPPPPPPRL, HPPG…PPFP, and PIRP…PTAP.

Regulator of cell size that promotes cell size increase independently of mTOR and Hippo signaling pathways. Acts by stimulating the translation of specific mRNAs, including those encoding proteins affecting mitochondrial functions. Increases mitochondrial mass and respiration. The sequence is that of Protein Largen (PRR16) from Homo sapiens (Human).